Reading from the N-terminus, the 1485-residue chain is ABC multidrug transporter I (1485 aa).

Disordered regions lie at residues 1–57 (MDEK…EEFS) and 75–111 (KQIS…ALRG). A compositionally biased stretch (polar residues) spans 8-24 (SESSNGSDVDSLSTASA). Asparagine 12 carries an N-linked (GlcNAc...) asparagine glycan. Positions 85–95 (GKTEDVERSDS) are enriched in basic and acidic residues. Residues asparagine 132, asparagine 335, and asparagine 451 are each glycosylated (N-linked (GlcNAc...) asparagine). One can recognise an ABC transporter 1 domain in the interval 163-411 (MHMLGYGKKG…FESLGFKERP (249 aa)). The next 7 membrane-spanning stretches (helical) occupy residues 522–542 (FAQT…GTVW), 556–576 (GGLL…ELVS), 600–620 (IAQI…FSII), 623–643 (FMCG…IIVL), 664–684 (YAMK…GYLI), 691–711 (EWLR…ALMV), and 774–794 (FGIM…HGET). An ABC transporter 2 domain is found at 846-1089 (FTWEDVCYDV…LLDYFRRNGA (244 aa)). Residue 882 to 889 (GASGAGKT) participates in ATP binding. 5 consecutive transmembrane segments (helical) span residues 1184-1204 (YGFT…LAFL), 1211-1231 (ASLQ…AIIL), 1268-1288 (LPYS…IPGF), 1299-1319 (FLMV…ISAL), and 1325-1345 (IASQ…GVAI). 2 N-linked (GlcNAc...) asparagine glycosylation sites follow: asparagine 1396 and asparagine 1418. A helical transmembrane segment spans residues 1449 to 1469 (LGIFLAFIGSNLIILFLAVSF).

It belongs to the ABC transporter superfamily. ABCG family. PDR (TC 3.A.1.205) subfamily.

It localises to the cell membrane. The enzyme catalyses fluconazole(in) + ATP + H2O = fluconazole(out) + ADP + phosphate + H(+). With respect to regulation, the efflux inhibitor FK506 does not impair the transport activity. Its function is as follows. ABC efflux transporter that confers resistance to fluconazole (FLC) but shows no resistance to other azoles. Is also able to transport rhodamine 6G (R-6G), a known substrate for many ABC transporters. The chain is ABC multidrug transporter I from Aspergillus fumigatus (strain ATCC MYA-4609 / CBS 101355 / FGSC A1100 / Af293) (Neosartorya fumigata).